The primary structure comprises 311 residues: tRNA-cytidine(32) 2-sulfurtransferase (311 aa).

The PP-loop motif motif lies at 47–52 (SGGKDS). Residues Cys-122, Cys-125, and Cys-213 each contribute to the [4Fe-4S] cluster site.

This sequence belongs to the TtcA family. In terms of assembly, homodimer. Mg(2+) serves as cofactor. Requires [4Fe-4S] cluster as cofactor.

It is found in the cytoplasm. It catalyses the reaction cytidine(32) in tRNA + S-sulfanyl-L-cysteinyl-[cysteine desulfurase] + AH2 + ATP = 2-thiocytidine(32) in tRNA + L-cysteinyl-[cysteine desulfurase] + A + AMP + diphosphate + H(+). It participates in tRNA modification. In terms of biological role, catalyzes the ATP-dependent 2-thiolation of cytidine in position 32 of tRNA, to form 2-thiocytidine (s(2)C32). The sulfur atoms are provided by the cysteine/cysteine desulfurase (IscS) system. This Citrobacter koseri (strain ATCC BAA-895 / CDC 4225-83 / SGSC4696) protein is tRNA-cytidine(32) 2-sulfurtransferase.